The chain runs to 121 residues: uncharacterized protein (121 aa).

This is an uncharacterized protein from Microplitis demolitor (Parasitoid wasp).